Here is a 475-residue protein sequence, read N- to C-terminus: Ribulose bisphosphate carboxylase large chain (475 aa).

The propeptide occupies 1–2; sequence MA. An N-acetylproline modification is found at P3. Position 14 is an N6,N6,N6-trimethyllysine (K14). Substrate contacts are provided by N123 and T173. K175 functions as the Proton acceptor in the catalytic mechanism. A substrate-binding site is contributed by K177. Positions 201, 203, and 204 each coordinate Mg(2+). K201 is subject to N6-carboxylysine. H294 acts as the Proton acceptor in catalysis. Residues R295, H327, and S379 each coordinate substrate.

This sequence belongs to the RuBisCO large chain family. Type I subfamily. As to quaternary structure, heterohexadecamer of 8 large chains and 8 small chains; disulfide-linked. The disulfide link is formed within the large subunit homodimers. Mg(2+) is required as a cofactor. The disulfide bond which can form in the large chain dimeric partners within the hexadecamer appears to be associated with oxidative stress and protein turnover.

The protein localises to the plastid. Its subcellular location is the chloroplast. The enzyme catalyses 2 (2R)-3-phosphoglycerate + 2 H(+) = D-ribulose 1,5-bisphosphate + CO2 + H2O. The catalysed reaction is D-ribulose 1,5-bisphosphate + O2 = 2-phosphoglycolate + (2R)-3-phosphoglycerate + 2 H(+). Functionally, ruBisCO catalyzes two reactions: the carboxylation of D-ribulose 1,5-bisphosphate, the primary event in carbon dioxide fixation, as well as the oxidative fragmentation of the pentose substrate in the photorespiration process. Both reactions occur simultaneously and in competition at the same active site. The sequence is that of Ribulose bisphosphate carboxylase large chain from Tupiella akineta (Green alga).